The following is a 398-amino-acid chain: RNA-binding protein rnc1 (398 aa).

The disordered stretch occupies residues 40–78 (KVSIPTPKPSTPLSTLTNGSTIQQSMTNQPEPTSQVPPI). Residue Thr50 is modified to Phosphothreonine. Positions 57–76 (NGSTIQQSMTNQPEPTSQVP) are enriched in polar residues. KH domains lie at 93–157 (QLTL…YRFI) and 178–243 (PRKL…IWEI). Over residues 274 to 290 (ASTASPQQVSPPAAPST) the composition is skewed to low complexity. Positions 274-295 (ASTASPQQVSPPAAPSTTSGEA) are disordered. The 66-residue stretch at 320–385 (KVTQNISIPA…EENEKALFLL (66 aa)) folds into the KH 3 domain.

Post-translationally, phosphorylated by pmk1. Phosphorylation causes enhancement of the RNA-binding activity.

The protein resides in the cytoplasm. Functionally, binds and stabilizes pmp1 mRNA and hence acts as a negative regulator of pmk1 signaling. Overexpression suppresses the Cl(-) sensitivity of calcineurin deletion. The chain is RNA-binding protein rnc1 from Schizosaccharomyces pombe (strain 972 / ATCC 24843) (Fission yeast).